The sequence spans 256 residues: Probable serine/threonine-protein kinase YbdM (256 aa).

A Protein kinase domain is found at 25-256 (YKIEECLGMG…DLNRAIQSVT (232 aa)). Residues 31–39 (LGMGGYGLV) and Lys54 each bind ATP. Asp149 functions as the Proton acceptor in the catalytic mechanism.

It belongs to the protein kinase superfamily. Ser/Thr protein kinase family.

It carries out the reaction L-seryl-[protein] + ATP = O-phospho-L-seryl-[protein] + ADP + H(+). It catalyses the reaction L-threonyl-[protein] + ATP = O-phospho-L-threonyl-[protein] + ADP + H(+). The sequence is that of Probable serine/threonine-protein kinase YbdM (ybdM) from Bacillus subtilis (strain 168).